Consider the following 388-residue polypeptide: ATP phosphoribosyltransferase regulatory subunit (388 aa).

The protein belongs to the class-II aminoacyl-tRNA synthetase family. HisZ subfamily. As to quaternary structure, heteromultimer composed of HisG and HisZ subunits.

Its subcellular location is the cytoplasm. The protein operates within amino-acid biosynthesis; L-histidine biosynthesis; L-histidine from 5-phospho-alpha-D-ribose 1-diphosphate: step 1/9. Its function is as follows. Required for the first step of histidine biosynthesis. May allow the feedback regulation of ATP phosphoribosyltransferase activity by histidine. This chain is ATP phosphoribosyltransferase regulatory subunit, found in Acinetobacter baylyi (strain ATCC 33305 / BD413 / ADP1).